Consider the following 484-residue polypeptide: Putative tyramine receptor 2 (484 aa).

Topologically, residues 1-54 are extracellular; the sequence is MVRVELQAASLMNGSSAAEEPQDALVGGDACGGRRPPSVLGVRLAVPEWEVAVT. Residue Asn-13 is glycosylated (N-linked (GlcNAc...) asparagine). Residues 55 to 77 form a helical membrane-spanning segment; that stretch reads AVSLSLIILITIVGNVLVVLSVF. At 78 to 87 the chain is on the cytoplasmic side; it reads TYKPLRIVQN. Residues 88-109 traverse the membrane as a helical segment; that stretch reads FFIVSLAVADLTVAVLVMPFNV. Residues 110 to 126 lie on the Extracellular side of the membrane; that stretch reads AYSLIQRWVFGIVVCKM. An intrachain disulfide couples Cys-124 to Cys-203. The helical transmembrane segment at 127–147 threads the bilayer; that stretch reads WLTCDVLCCTASILNLCAIAL. At 148–167 the chain is on the cytoplasmic side; sequence DRYWAITDPINYAQKRTLRR. The helical transmembrane segment at 168–190 threads the bilayer; the sequence is VLAMIAGVWLLSGVISSPPLIGW. Residues 191 to 215 lie on the Extracellular side of the membrane; that stretch reads NDWPMEFNDTTPCQLTEEQGYVIYS. Asn-198 carries N-linked (GlcNAc...) asparagine glycosylation. A helical membrane pass occupies residues 216–237; that stretch reads SLGSFFIPLFIMTIVYVEIFIA. The Cytoplasmic portion of the chain corresponds to 238 to 411; the sequence is TKRRLRERAK…LSKERRAART (174 aa). The span at 253–280 shows a compositional bias: polar residues; the sequence is SAMKQQMAAQAVPSSVPSHDQESVSSET. Disordered regions lie at residues 253 to 322 and 350 to 383; these read SAMK…PAMV and TTTT…PTPV. Basic residues predominate over residues 295 to 306; it reads EKRRKTKKKSKK. Positions 350–360 are enriched in low complexity; sequence TTTTTTTTTTT. Residues 361–378 show a composition bias toward polar residues; that stretch reads AVTDSPRSRTASQKGSTA. Residues 412-433 traverse the membrane as a helical segment; sequence LGIIMGVFVVCWLPFFLMYVIV. The Extracellular portion of the chain corresponds to 434–448; that stretch reads PFCNPSCKPSPKLVN. A helical membrane pass occupies residues 449–470; the sequence is FITWLGYINSALNPIIYTIFNL. Topologically, residues 471–484 are cytoplasmic; the sequence is DFRRAFKKLLHFKT.

Belongs to the G-protein coupled receptor 1 family.

It localises to the cell membrane. Functionally, G-protein coupled receptor for tyramine, a known neurotransmitter and neuromodulator and direct precursor of octopamine. The chain is Putative tyramine receptor 2 (GCR2) from Locusta migratoria (Migratory locust).